A 196-amino-acid chain; its full sequence is Agamous-like MADS-box protein AGL27 (196 aa).

Residues 1-61 (MGRRKIEIKR…GKLYDSSSGD (61 aa)) enclose the MADS-box domain. One can recognise a K-box domain in the interval 80–170 (ALDLEEKIQN…ASQMGKNTLL (91 aa)). The segment at 175–196 (ERGMFPGSSSGNKIPETLPLLN) is disordered.

In terms of assembly, interacts with AGL39, AGL97 and AGL74. Expressed in most plant tissues, embryo, seedlings, roots, leaves, stems, inflorescence, pollen, siliques and flowers.

Its subcellular location is the nucleus. Its function is as follows. Probable transcription factor involved in the negative regulation of flowering time in both long and short days, probably through the photoperiodic and vernalization pathways. Prevents premature flowering. This is Agamous-like MADS-box protein AGL27 (AGL27) from Arabidopsis thaliana (Mouse-ear cress).